The chain runs to 470 residues: ATP synthase subunit beta (470 aa).

An ATP-binding site is contributed by 157 to 164 (GGAGVGKT).

The protein belongs to the ATPase alpha/beta chains family. F-type ATPases have 2 components, CF(1) - the catalytic core - and CF(0) - the membrane proton channel. CF(1) has five subunits: alpha(3), beta(3), gamma(1), delta(1), epsilon(1). CF(0) has three main subunits: a(1), b(2) and c(9-12). The alpha and beta chains form an alternating ring which encloses part of the gamma chain. CF(1) is attached to CF(0) by a central stalk formed by the gamma and epsilon chains, while a peripheral stalk is formed by the delta and b chains.

Its subcellular location is the cell inner membrane. The catalysed reaction is ATP + H2O + 4 H(+)(in) = ADP + phosphate + 5 H(+)(out). Its function is as follows. Produces ATP from ADP in the presence of a proton gradient across the membrane. The catalytic sites are hosted primarily by the beta subunits. The chain is ATP synthase subunit beta from Geotalea daltonii (strain DSM 22248 / JCM 15807 / FRC-32) (Geobacter daltonii).